The following is a 165-amino-acid chain: Small ribosomal subunit protein uS5 (165 aa).

The S5 DRBM domain maps to Leu10–Val73.

This sequence belongs to the universal ribosomal protein uS5 family. Part of the 30S ribosomal subunit. Contacts proteins S4 and S8.

Functionally, with S4 and S12 plays an important role in translational accuracy. Located at the back of the 30S subunit body where it stabilizes the conformation of the head with respect to the body. This Clostridium botulinum (strain ATCC 19397 / Type A) protein is Small ribosomal subunit protein uS5.